Here is a 360-residue protein sequence, read N- to C-terminus: Phospho-N-acetylmuramoyl-pentapeptide-transferase (360 aa).

10 helical membrane passes run 25-45 (RAIL…PWVI), 74-94 (MGGA…SDFG), 97-117 (YVWV…VDDY), 134-154 (YFWQ…TAQA), 168-188 (VALN…VGTS), 199-219 (GLAI…AYLA), 236-256 (AGEL…FLWF), 263-283 (VFMG…VAVI), 288-308 (FVLF…ILQV), and 339-359 (IVRF…TLKF).

This sequence belongs to the glycosyltransferase 4 family. MraY subfamily. Requires Mg(2+) as cofactor.

It localises to the cell inner membrane. It catalyses the reaction UDP-N-acetyl-alpha-D-muramoyl-L-alanyl-gamma-D-glutamyl-meso-2,6-diaminopimeloyl-D-alanyl-D-alanine + di-trans,octa-cis-undecaprenyl phosphate = di-trans,octa-cis-undecaprenyl diphospho-N-acetyl-alpha-D-muramoyl-L-alanyl-D-glutamyl-meso-2,6-diaminopimeloyl-D-alanyl-D-alanine + UMP. It participates in cell wall biogenesis; peptidoglycan biosynthesis. Functionally, catalyzes the initial step of the lipid cycle reactions in the biosynthesis of the cell wall peptidoglycan: transfers peptidoglycan precursor phospho-MurNAc-pentapeptide from UDP-MurNAc-pentapeptide onto the lipid carrier undecaprenyl phosphate, yielding undecaprenyl-pyrophosphoryl-MurNAc-pentapeptide, known as lipid I. The polypeptide is Phospho-N-acetylmuramoyl-pentapeptide-transferase (Cellvibrio japonicus (strain Ueda107) (Pseudomonas fluorescens subsp. cellulosa)).